The sequence spans 228 residues: Cytidylate kinase (228 aa).

12–20 serves as a coordination point for ATP; it reads GPSGSGKGT.

Belongs to the cytidylate kinase family. Type 1 subfamily.

The protein localises to the cytoplasm. The enzyme catalyses CMP + ATP = CDP + ADP. It carries out the reaction dCMP + ATP = dCDP + ADP. The sequence is that of Cytidylate kinase from Pseudomonas entomophila (strain L48).